The sequence spans 185 residues: MRRYETIFISDPDLPEDNRATLFEKMQGLIAEHDGYIAFFDEWGARKLAYEVKKKKRGYYVLMDFCAEGSLIAEMERIMRIDDRILKFLTIQTEEEVDLDAVKEQVAKAKAEKEAAQKAAAEKAEAARLEAEKAAEEEAAKAAEAQAKEAPAAEAPAEEAPAAEAPAEAPAEEPAEEPKSDEEDA.

Over residues 115–141 (AAQKAAAEKAEAARLEAEKAAEEEAAK) the composition is skewed to basic and acidic residues. Residues 115 to 185 (AAQKAAAEKA…EEPKSDEEDA (71 aa)) form a disordered region. The span at 142–169 (AAEAQAKEAPAAEAPAEEAPAAEAPAEA) shows a compositional bias: low complexity. Residues 170–185 (PAEEPAEEPKSDEEDA) show a composition bias toward acidic residues.

Belongs to the bacterial ribosomal protein bS6 family.

Binds together with bS18 to 16S ribosomal RNA. This chain is Small ribosomal subunit protein bS6, found in Desulfatibacillum aliphaticivorans.